Consider the following 523-residue polypeptide: Probable lipid II flippase MurJ (523 aa).

The next 12 helical transmembrane spans lie at 98–118, 146–166, 170–190, 201–221, 246–266, 284–304, 328–348, 360–380, 395–415, 422–442, 461–481, and 489–509; these read AFYS…IVYV, IMFG…ILNA, FGLP…FTFM, GLAW…AVAL, MLPG…NLYF, LLEL…LPTL, LFLA…IIEV, VQMT…VSCS, VPMV…PVLM, GLMI…MGLL, FVLA…LMAQ, and LALF…AYVL.

It belongs to the MurJ/MviN family.

The protein resides in the cell inner membrane. It participates in cell wall biogenesis; peptidoglycan biosynthesis. Involved in peptidoglycan biosynthesis. Transports lipid-linked peptidoglycan precursors from the inner to the outer leaflet of the cytoplasmic membrane. This is Probable lipid II flippase MurJ from Bdellovibrio bacteriovorus (strain ATCC 15356 / DSM 50701 / NCIMB 9529 / HD100).